We begin with the raw amino-acid sequence, 232 residues long: U-scoloptoxin(11)-Ssd2a (232 aa).

Residues 1-21 (MFQFCLLILLLAPGRFFSALG) form the signal peptide. Residues 22-32 (KPQETLTVENR) constitute a propeptide that is removed on maturation.

Post-translationally, contains 8 disulfide bonds. As to expression, expressed by the venom gland.

It localises to the secreted. This chain is U-scoloptoxin(11)-Ssd2a, found in Scolopendra dehaani (Thai centipede).